We begin with the raw amino-acid sequence, 451 residues long: Gamma-aminobutyric acid receptor subunit alpha-2 (451 aa).

Residues Met1–Ala28 form the signal peptide. Residues Asn29 to Lys249 lie on the Extracellular side of the membrane. An N-linked (GlcNAc...) asparagine glycan is attached at Asn38. A 4-aminobutanoate-binding site is contributed by Arg94. An N-linked (GlcNAc...) asparagine glycan is attached at Asn138. Thr157 serves as a coordination point for 4-aminobutanoate. A disulfide bond links Cys166 and Cys180. Residues Ile250–Val270 traverse the membrane as a helical segment. Over Ser271–Pro280 the chain is Cytoplasmic. A helical transmembrane segment spans residues Ala281–Ala300. Residues Arg301 to Thr311 are Extracellular-facing. A helical transmembrane segment spans residues Ala312–Ala332. Topologically, residues Thr333–Met420 are cytoplasmic. Residues Ser421–Leu441 traverse the membrane as a helical segment. Residues Asn442 to Pro451 lie on the Extracellular side of the membrane.

It belongs to the ligand-gated ion channel (TC 1.A.9) family. Gamma-aminobutyric acid receptor (TC 1.A.9.5) subfamily. GABRA2 sub-subfamily. As to quaternary structure, heteropentamer, formed by a combination of alpha (GABRA1-6), beta (GABRB1-3), gamma (GABRG1-3), delta (GABRD), epsilon (GABRE), rho (GABRR1-3), pi (GABRP) and theta (GABRQ) subunits, each subunit exhibiting distinct physiological and pharmacological properties. Interacts with UBQLN1. Interacts with KIF21B. Interacts with LHFPL4. Interacts with SHISA7; interaction leads to the regulation of GABA(A) receptor trafficking, channel deactivation kinetics and pharmacology. In terms of processing, glycosylated.

The protein localises to the postsynaptic cell membrane. The protein resides in the cell membrane. It localises to the cytoplasmic vesicle membrane. It is found in the cell projection. Its subcellular location is the dendrite. The enzyme catalyses chloride(in) = chloride(out). Activated by pentobarbital. Inhibited by the antagonist bicuculline. Its function is as follows. Alpha subunit of the heteropentameric ligand-gated chloride channel gated by gamma-aminobutyric acid (GABA), a major inhibitory neurotransmitter in the brain. GABA-gated chloride channels, also named GABA(A) receptors (GABAAR), consist of five subunits arranged around a central pore and contain GABA active binding site(s) located at the alpha and beta subunit interface(s). When activated by GABA, GABAARs selectively allow the flow of chloride anions across the cell membrane down their electrochemical gradient. Chloride influx into the postsynaptic neuron following GABAAR opening decreases the neuron ability to generate a new action potential, thereby reducing nerve transmission. The alpha-2 subunit exhibits synaptogenic activity together with beta-2 and very little to no activity together with beta-3, the gamma-2 subunit being necessary but not sufficient to induce rapid synaptic contacts formation. This chain is Gamma-aminobutyric acid receptor subunit alpha-2 (GABRA2), found in Pongo abelii (Sumatran orangutan).